A 141-amino-acid polypeptide reads, in one-letter code: Cystatin-SA (141 aa).

The N-terminal stretch at 1-20 is a signal peptide; it reads MAWPLCTLLLLLATQAVALA. The Secondary area of contact signature appears at 76-80; it reads QIVGG. Intrachain disulfides connect cysteine 94-cysteine 104 and cysteine 118-cysteine 138.

As to expression, expressed in submandibular and sublingual saliva but not in parotid saliva (at protein level). Expressed in submandibular gland and parotid gland.

The protein resides in the secreted. Functionally, thiol protease inhibitor. In Homo sapiens (Human), this protein is Cystatin-SA (CST2).